The sequence spans 374 residues: GPN-loop GTPase 1 (374 aa).

Residue A2 is modified to N-acetylalanine. 29 to 34 contacts GTP; it reads GSGKTT. Residues 86–88 carry the Gly-Pro-Asn (GPN)-loop; involved in dimer interface motif; it reads GPN. GTP is bound at residue 189–192; it reads NKTD. Phosphoserine occurs at positions 301, 312, and 314. The segment at 326–354 is disordered; that stretch reads RGTLDEEDEEADSDTDDIDHRVTEESHEE. Position 328 is a phosphothreonine (T328). Over residues 330 to 342 the composition is skewed to acidic residues; it reads DEEDEEADSDTDD. S338 carries the post-translational modification Phosphoserine. Residue T340 is modified to Phosphothreonine. Positions 343–354 are enriched in basic and acidic residues; that stretch reads IDHRVTEESHEE.

The protein belongs to the GPN-loop GTPase family. In terms of assembly, heterodimer with GPN3. Binds to RNA polymerase II (RNAPII). Interacts directly with RNAPII subunits RPB4 and RPB7 and the CTD of RPB1. Interacts with XPA. In terms of tissue distribution, expressed ubiquitously.

The protein resides in the cytoplasm. It is found in the nucleus. Small GTPase required for proper nuclear import of RNA polymerase II (RNAPII). May act at an RNAP assembly step prior to nuclear import. Forms an interface between the RNA polymerase II enzyme and chaperone/scaffolding proteins, suggesting that it is required to connect RNA polymerase II to regulators of protein complex formation. May be involved in nuclear localization of XPA. The chain is GPN-loop GTPase 1 from Homo sapiens (Human).